Consider the following 592-residue polypeptide: Aspartate--tRNA(Asp/Asn) ligase (592 aa).

Glu-171 is a binding site for L-aspartate. Residues 195–198 (QLFK) are aspartate. Residue Arg-217 coordinates L-aspartate. ATP is bound by residues 217-219 (RDE) and Gln-226. Residue His-447 coordinates L-aspartate. Position 481 (Glu-481) interacts with ATP. Residue Arg-488 coordinates L-aspartate. 533 to 536 (GLDR) serves as a coordination point for ATP.

Belongs to the class-II aminoacyl-tRNA synthetase family. Type 1 subfamily. As to quaternary structure, homodimer.

It localises to the cytoplasm. It carries out the reaction tRNA(Asx) + L-aspartate + ATP = L-aspartyl-tRNA(Asx) + AMP + diphosphate. In terms of biological role, aspartyl-tRNA synthetase with relaxed tRNA specificity since it is able to aspartylate not only its cognate tRNA(Asp) but also tRNA(Asn). Reaction proceeds in two steps: L-aspartate is first activated by ATP to form Asp-AMP and then transferred to the acceptor end of tRNA(Asp/Asn). This Psychromonas ingrahamii (strain DSM 17664 / CCUG 51855 / 37) protein is Aspartate--tRNA(Asp/Asn) ligase.